We begin with the raw amino-acid sequence, 389 residues long: MGYIGAHGVAALKKHKYSGVDHSYLAKYVLQPFWNRFVKIFPLWMPPNMITLMGFMFLLTSALLGYIYSPKLDSPPPRWVHFAHGLLLFLYQTFDAVDGKQARRTNSSSPLGELFDHGCDALGCALETMAYGSTAMCGRDTFWFWVISAVPFFGATWEHYFTNTLTLPVVNGPTEGLALIYCGHFFTAIVGAEWWAQPFGKSIPLFSWVPFLNEMQMSRIILFSMIFFAVIPTLAINTSNVYKVVHSRNGSMLLALAMLYPLVTLIAGVLIWDYLSPIDLIRNYPHLVVLGTGLAFGFLVGRMILAHLCDEPKGLKTNMCMSLLYLPFALANALTARLNDGVPLVDEFWVLLGYCIFTLSLYAHFATSVIHEITTALGIYCFRITRKEA.

Helical transmembrane passes span methionine 49–serine 69, threonine 141–phenylalanine 161, glycine 176–alanine 196, isoleucine 220–asparagine 240, methionine 252–tryptophan 272, histidine 286–alanine 306, methionine 321–leucine 338, and valine 350–isoleucine 370.

Belongs to the CDP-alcohol phosphatidyltransferase class-I family. Requires Mg(2+) as cofactor. Mn(2+) is required as a cofactor.

It is found in the membrane. The enzyme catalyses CDP-ethanolamine + a 1,2-diacyl-sn-glycerol = a 1,2-diacyl-sn-glycero-3-phosphoethanolamine + CMP + H(+). It catalyses the reaction CDP-choline + a 1,2-diacyl-sn-glycerol = a 1,2-diacyl-sn-glycero-3-phosphocholine + CMP + H(+). It functions in the pathway phospholipid metabolism; phosphatidylethanolamine biosynthesis; phosphatidylethanolamine from ethanolamine: step 3/3. The protein operates within phospholipid metabolism; phosphatidylcholine biosynthesis; phosphatidylcholine from phosphocholine: step 2/2. Functionally, catalyzes both phosphatidylcholine and phosphatidylethanolamine biosynthesis from CDP-choline and CDP-ethanolamine, respectively. Has a higher cholinephosphotransferase activity than ethanolaminephosphotransferase activity. This Arabidopsis thaliana (Mouse-ear cress) protein is Choline/ethanolaminephosphotransferase 2 (AAPT2).